The sequence spans 481 residues: Metalloprotease TldD (481 aa).

Belongs to the peptidase U62 family.

In terms of biological role, metalloprotease involved in CcdA degradation. Suppresses the inhibitory activity of the carbon storage regulator (CsrA). This chain is Metalloprotease TldD (tldD), found in Escherichia coli (strain K12).